Reading from the N-terminus, the 442-residue chain is tRNA modification GTPase MnmE (442 aa).

(6S)-5-formyl-5,6,7,8-tetrahydrofolate is bound by residues Arg-24, Glu-82, and Lys-120. A TrmE-type G domain is found at 217 to 367 (GLHIVITGEP…LISLIKKKAE (151 aa)). GTP contacts are provided by residues 227-232 (NVGKST), 246-252 (SEYAGTT), and 271-274 (DTAG). Position 231 (Ser-231) interacts with Mg(2+). Ser-246 serves as a coordination point for K(+). Thr-252 is a binding site for Mg(2+). Lys-442 is a (6S)-5-formyl-5,6,7,8-tetrahydrofolate binding site.

It belongs to the TRAFAC class TrmE-Era-EngA-EngB-Septin-like GTPase superfamily. TrmE GTPase family. Homodimer. Heterotetramer of two MnmE and two MnmG subunits. K(+) is required as a cofactor.

The protein localises to the cytoplasm. Functionally, exhibits a very high intrinsic GTPase hydrolysis rate. Involved in the addition of a carboxymethylaminomethyl (cmnm) group at the wobble position (U34) of certain tRNAs, forming tRNA-cmnm(5)s(2)U34. This is tRNA modification GTPase MnmE from Wolbachia pipientis subsp. Culex pipiens (strain wPip).